We begin with the raw amino-acid sequence, 68 residues long: Small ribosomal subunit protein bS21 (68 aa).

Belongs to the bacterial ribosomal protein bS21 family.

In Cereibacter sphaeroides (strain ATCC 17029 / ATH 2.4.9) (Rhodobacter sphaeroides), this protein is Small ribosomal subunit protein bS21.